A 203-amino-acid chain; its full sequence is Cilia- and flagella-associated protein 20 (203 aa).

This sequence belongs to the CFAP20 family.

The protein localises to the nucleus. It is found in the cytoplasm. The protein resides in the cytoskeleton. Its subcellular location is the microtubule organizing center. It localises to the centrosome. The protein localises to the centriole. It is found in the cilium basal body. The protein resides in the cilium axoneme. Its function is as follows. Cilium- and flagellum-specific protein that plays a role in axonemal structure organization and motility. Microtubule inner protein (MIP) part of the dynein-decorated doublet microtubules (DMTs) in cilia axoneme, which is required for motile cilia beating. Involved in the regulation of the size and morphology of cilia. Required for axonemal microtubules polyglutamylation. The sequence is that of Cilia- and flagella-associated protein 20 from Caenorhabditis briggsae.